We begin with the raw amino-acid sequence, 554 residues long: Hydroxylamine reductase (554 aa).

[2Fe-2S] cluster is bound by residues Cys-3, Cys-6, Cys-18, and Cys-25. His-252, Glu-276, Cys-320, Cys-408, Cys-436, Cys-461, Glu-495, and Lys-497 together coordinate hybrid [4Fe-2O-2S] cluster. A Cysteine persulfide modification is found at Cys-408.

It belongs to the HCP family. [2Fe-2S] cluster is required as a cofactor. Requires hybrid [4Fe-2O-2S] cluster as cofactor.

It localises to the cytoplasm. It carries out the reaction A + NH4(+) + H2O = hydroxylamine + AH2 + H(+). In terms of biological role, catalyzes the reduction of hydroxylamine to form NH(3) and H(2)O. This is Hydroxylamine reductase from Shewanella pealeana (strain ATCC 700345 / ANG-SQ1).